Reading from the N-terminus, the 329-residue chain is MNNLNSVFDYEDIQLIPNKCVINSRLEADTSVKLGNFTFKLPVVPANMQTIIDDKIAEMLAKEGYFYIMHRFEAENRAAFIKKMHQQGLIASISVGVKADEHAFIREISADALIPEFITIDIAHGHADSVIKTIQLIKRLMPQTFVIAGNVGTPEAVRELENAGADATKVGIGPGKVCITKVKTGFGTGGWQLAAVKWCAKAASKPVIADGGIRTHGDIAKSIRMGATMVMVGSLFAAHEESPGQTVERDGQLFKEYFGSASEYQKGEHKNVEGKKILLPHKGSLKDTLKEMEEDLQSSISYAGGRDLSALTKVDYVVVKNSIWNGDAI.

Cys178 (thioimidate intermediate) is an active-site residue. NADP(+) is bound at residue 207–230; the sequence is VIADGGIRTHGDIAKSIRMGATMV.

It belongs to the IMPDH/GMPR family. GuaC type 2 subfamily.

It catalyses the reaction IMP + NH4(+) + NADP(+) = GMP + NADPH + 2 H(+). Its function is as follows. Catalyzes the irreversible NADPH-dependent deamination of GMP to IMP. It functions in the conversion of nucleobase, nucleoside and nucleotide derivatives of G to A nucleotides, and in maintaining the intracellular balance of A and G nucleotides. The polypeptide is GMP reductase (Lactococcus lactis subsp. lactis (strain IL1403) (Streptococcus lactis)).